A 341-amino-acid chain; its full sequence is Protein BEARSKIN2 (341 aa).

Residues 9 to 160 (VPPGFRFHPT…GWVVCRVFMK (152 aa)) form the NAC domain. Residues 109 to 166 (IGMRKTLVFYKGRAPHGQKTDWIMHEYRLEDADDPQANPSEDGWVVCRVFMKKNLFKV) mediate DNA binding.

Expressed throughout the root cap, in both columella (COL) and lateral root cap (LRC) cells, with higher levels in the COL-adjoining LRC than the upper LRC. Also present at low levels expression in the tips of cotyledons and the cotyledon vasculature, as weel as in vasculature of the first pair of true leaves and at the hydathodes.

It localises to the nucleus. In terms of biological role, transcription activator. Together with BRN1 and SMB, regulates cellular maturation of root cap. Promotes the expression of genes involved in secondary cell walls (SCW) biosynthesis. The protein is Protein BEARSKIN2 (BRN2) of Arabidopsis thaliana (Mouse-ear cress).